The chain runs to 428 residues: Putative ankyrin repeat protein FPV234 (428 aa).

ANK repeat units lie at residues 6-35 (KDDI…DPNV), 39-68 (YQYS…DPNI), 71-100 (FFTP…IVNL), 103-132 (YCLK…DINS), 137-169 (NGKY…DINK), 174-202 (TNTS…NINI), 206-238 (MGRN…DINA), and 242-271 (EGNT…YLSY).

This chain is Putative ankyrin repeat protein FPV234, found in Fowlpox virus (strain NVSL) (FPV).